The sequence spans 110 residues: UPF0145 protein LMOf2365_0219 (110 aa).

This sequence belongs to the UPF0145 family.

The protein is UPF0145 protein LMOf2365_0219 of Listeria monocytogenes serotype 4b (strain F2365).